The sequence spans 102 residues: uncharacterized protein (102 aa).

The helical transmembrane segment at 29-52 (IGSTYFCFGGAIFILVAPLTNLVY) threads the bilayer.

The protein resides in the membrane. This is an uncharacterized protein from Saccharomyces cerevisiae (strain ATCC 204508 / S288c) (Baker's yeast).